The chain runs to 417 residues: Serine hydroxymethyltransferase (417 aa).

(6S)-5,6,7,8-tetrahydrofolate is bound by residues Leu121 and 125 to 127 (GHL). Lys230 bears the N6-(pyridoxal phosphate)lysine mark. A (6S)-5,6,7,8-tetrahydrofolate-binding site is contributed by 355–357 (SPF).

This sequence belongs to the SHMT family. As to quaternary structure, homodimer. Requires pyridoxal 5'-phosphate as cofactor.

The protein resides in the cytoplasm. The catalysed reaction is (6R)-5,10-methylene-5,6,7,8-tetrahydrofolate + glycine + H2O = (6S)-5,6,7,8-tetrahydrofolate + L-serine. Its pathway is one-carbon metabolism; tetrahydrofolate interconversion. It functions in the pathway amino-acid biosynthesis; glycine biosynthesis; glycine from L-serine: step 1/1. Functionally, catalyzes the reversible interconversion of serine and glycine with tetrahydrofolate (THF) serving as the one-carbon carrier. This reaction serves as the major source of one-carbon groups required for the biosynthesis of purines, thymidylate, methionine, and other important biomolecules. Also exhibits THF-independent aldolase activity toward beta-hydroxyamino acids, producing glycine and aldehydes, via a retro-aldol mechanism. The polypeptide is Serine hydroxymethyltransferase (Legionella pneumophila subsp. pneumophila (strain Philadelphia 1 / ATCC 33152 / DSM 7513)).